The chain runs to 353 residues: Putative transport protein aq_740 (353 aa).

8 consecutive transmembrane segments (helical) span residues 4 to 24, 28 to 48, 60 to 80, 156 to 176, 209 to 229, 240 to 260, 268 to 288, and 309 to 329; these read LSLF…LYLL, FNPI…YGFI, FLVI…FAVI, VYTA…LFFI, VLAV…MGFI, LIWA…AAFV, LFTT…TFLI, and VALF…GVFL.

Belongs to the autoinducer-2 exporter (AI-2E) (TC 2.A.86) family.

The protein localises to the cell membrane. The chain is Putative transport protein aq_740 from Aquifex aeolicus (strain VF5).